Reading from the N-terminus, the 286-residue chain is NADH-cytochrome b5 reductase 1 (286 aa).

A helical membrane pass occupies residues 6 to 26 (FILVIIGSVALAAGVKYVFTL). One can recognise an FAD-binding FR-type domain in the interval 52–155 (QEYRKFQLKE…KGPKGKFNYQ (104 aa)). FAD is bound by residues 135–150 (DNMFIGDSIEVKGPKG) and 161–193 (SIGMLAGGTGITPMLQVIKAILKNPSDKTEISL).

The protein belongs to the flavoprotein pyridine nucleotide cytochrome reductase family. Monomer. FAD serves as cofactor.

The protein resides in the endoplasmic reticulum membrane. It localises to the mitochondrion outer membrane. The enzyme catalyses 2 Fe(III)-[cytochrome b5] + NADH = 2 Fe(II)-[cytochrome b5] + NAD(+) + H(+). Functionally, electron donor reductase for cytochrome b5. The cytochrome b5/NADH cytochrome b5 reductase electron transfer system supports the catalytic activity of several sterol biosynthetic enzymes. This Dictyostelium discoideum (Social amoeba) protein is NADH-cytochrome b5 reductase 1 (cyb5r1).